We begin with the raw amino-acid sequence, 185 residues long: Elongation factor P (185 aa).

This sequence belongs to the elongation factor P family.

Its subcellular location is the cytoplasm. It participates in protein biosynthesis; polypeptide chain elongation. In terms of biological role, involved in peptide bond synthesis. Stimulates efficient translation and peptide-bond synthesis on native or reconstituted 70S ribosomes in vitro. Probably functions indirectly by altering the affinity of the ribosome for aminoacyl-tRNA, thus increasing their reactivity as acceptors for peptidyl transferase. In Bordetella avium (strain 197N), this protein is Elongation factor P.